The following is a 791-amino-acid chain: Lon protease (791 aa).

In terms of domain architecture, Lon N-terminal spans 3–209 (KPILISRAIV…TILHLLFDQL (207 aa)). Position 365–372 (365–372 (GPPGVGKT)) interacts with ATP. The Lon proteolytic domain occupies 605-790 (TTIPGIVNGM…DEVYNIVFGE (186 aa)). Active-site residues include S696 and K739.

This sequence belongs to the peptidase S16 family. In terms of assembly, homohexamer. Organized in a ring with a central cavity.

The protein resides in the cytoplasm. The enzyme catalyses Hydrolysis of proteins in presence of ATP.. In terms of biological role, ATP-dependent serine protease that mediates the selective degradation of mutant and abnormal proteins as well as certain short-lived regulatory proteins. Required for cellular homeostasis and for survival from DNA damage and developmental changes induced by stress. Degrades polypeptides processively to yield small peptide fragments that are 5 to 10 amino acids long. Binds to DNA in a double-stranded, site-specific manner. The chain is Lon protease from Ureaplasma parvum serovar 3 (strain ATCC 27815 / 27 / NCTC 11736).